Reading from the N-terminus, the 345-residue chain is L-threonine 3-dehydrogenase (345 aa).

C42 lines the Zn(2+) pocket. Active-site charge relay system residues include T44 and H47. Residues H67, E68, C97, C100, C103, and C111 each contribute to the Zn(2+) site. Residues I179, D199, R204, 266–268 (LGI), and 290–291 (IY) contribute to the NAD(+) site.

The protein belongs to the zinc-containing alcohol dehydrogenase family. In terms of assembly, homotetramer. The cofactor is Zn(2+).

It localises to the cytoplasm. The enzyme catalyses L-threonine + NAD(+) = (2S)-2-amino-3-oxobutanoate + NADH + H(+). It participates in amino-acid degradation; L-threonine degradation via oxydo-reductase pathway; glycine from L-threonine: step 1/2. Its function is as follows. Catalyzes the NAD(+)-dependent oxidation of L-threonine to 2-amino-3-ketobutyrate. The chain is L-threonine 3-dehydrogenase from Rhizobium johnstonii (strain DSM 114642 / LMG 32736 / 3841) (Rhizobium leguminosarum bv. viciae).